The chain runs to 986 residues: Bifunctional glutamine synthetase adenylyltransferase/adenylyl-removing enzyme (986 aa).

Residues 1–471 are adenylyl removase; that stretch reads MAEAIERSLS…RYAQLFEQEA (471 aa). The segment at 475 to 986 is adenylyl transferase; sequence TETGNLVFTG…RIFQGVVAAA (512 aa).

Belongs to the GlnE family. Mg(2+) is required as a cofactor.

It carries out the reaction [glutamine synthetase]-O(4)-(5'-adenylyl)-L-tyrosine + phosphate = [glutamine synthetase]-L-tyrosine + ADP. The catalysed reaction is [glutamine synthetase]-L-tyrosine + ATP = [glutamine synthetase]-O(4)-(5'-adenylyl)-L-tyrosine + diphosphate. Involved in the regulation of glutamine synthetase GlnA, a key enzyme in the process to assimilate ammonia. When cellular nitrogen levels are high, the C-terminal adenylyl transferase (AT) inactivates GlnA by covalent transfer of an adenylyl group from ATP to specific tyrosine residue of GlnA, thus reducing its activity. Conversely, when nitrogen levels are low, the N-terminal adenylyl removase (AR) activates GlnA by removing the adenylyl group by phosphorolysis, increasing its activity. The regulatory region of GlnE binds the signal transduction protein PII (GlnB) which indicates the nitrogen status of the cell. The sequence is that of Bifunctional glutamine synthetase adenylyltransferase/adenylyl-removing enzyme from Rhizobium meliloti (strain 1021) (Ensifer meliloti).